Reading from the N-terminus, the 131-residue chain is ATP synthase epsilon chain, chloroplastic (131 aa).

This sequence belongs to the ATPase epsilon chain family. In terms of assembly, F-type ATPases have 2 components, CF(1) - the catalytic core - and CF(0) - the membrane proton channel. CF(1) has five subunits: alpha(3), beta(3), gamma(1), delta(1), epsilon(1). CF(0) has three main subunits: a, b and c.

The protein localises to the plastid. It localises to the chloroplast thylakoid membrane. Functionally, produces ATP from ADP in the presence of a proton gradient across the membrane. The sequence is that of ATP synthase epsilon chain, chloroplastic from Oltmannsiellopsis viridis (Marine flagellate).